We begin with the raw amino-acid sequence, 1072 residues long: MREAAERRQQLELEHEQALAFLNAKQQEIQLLQQAQVEAKKEHEGAVQLLESKVRELEEKCRVQSEQFNLLSRDLEKFRQHTGSIDLLGSSSVALLDVPLAPGKPFPQYMNGLATSIHKGHEGPTGHYSVIGDYIPLSGDKLESPCVKPSFLLRSSSPRCRFESEMDNDRNSNNSKQSSSGKVHLCVARYSYNPFDGPNENPEAELPLTAGKYLYVYGDMDEDGFYEGELLDGQRGLVPSNFVDFIQDNESRLAGTLGSEQDQNFLNHSGISLERDSILHLHSPTQVDSGITDNGGGTLDVNIDDIGEDTVPYPRKITLIKQLAKSVIVGWEPPAVPPGWGTVSSYNVLVDKETRMSLALGRRTKALIEKLNTAACTYRISVQCVTSRGNSDELQCTLLVGKDVVVAPSQLRVDNITQISAQLSWLPTNSNYSHIIFLNEEELDIVKAARYKYQFFNLRPNMAYKVKVLAQPHQMPWQLPLEQREKKEACVEFSTLPAGPPAPPQDVTVHAGATAASVQVSWKPPALTPTGLSNGANVTGYGVYAKGQRVAEVIAPTADGTAVELIRLRSLEAKAVSVRTLSVQGESMDSALAAIPPDLLVPPAPHPRTAPPPKPLASDMDTKDQHLGPHVKVDESWEQSRSPGPAHGHMLEPPDMHSAGPGRRSPSPSRILPQPQGAPVSTTVAKAMAREAAQRVAESNRLEKRSLFLEQSSAGQYTNSDEEDGYASPEVKRRGTSVDDFLKGSELGKQPHCCHGDEYHTESSRGSDLSDIMEEDEEELYSEMQLEDGGRRRPSGTSHNALKILGNSTLMGRADRMEHVSRRYSHSGGGSHRHRPAMAPSIDEYTGRDHLSPDFYDESETDPGAEELPARIFVALFDYDPLTMSPNPDAAEEELPFKEGQIIKVYGDKDADGFYRGETCARLGLIPCNMVSEIHADDEEMMDQLLRQGFLPLNTPVEKIERSRRSGRGHSVPTRRMVALYDYDPRESSPNVDVEAELPFCTGDIITVFGEIDEDGFYYGELNGQKGLVPSNFLEEVPDDVEVHLSDAPPHYSHDPPMRSKAKRKKSVHFTP.

The SH3 1 domain maps to G181–D248. Fibronectin type-III domains follow at residues V311–V404, A407–A489, and P503–A604. Disordered stretches follow at residues P597 to S681 and S713 to N800. The segment covering L599–P615 has biased composition (pro residues). Residues M620–E635 show a composition bias toward basic and acidic residues. Residues G660 to R670 show a composition bias toward low complexity. 2 positions are modified to phosphoserine: S720 and S728. Composition is skewed to basic and acidic residues over residues E730–K743 and C754–R765. The segment covering D771–Y781 has biased composition (acidic residues). Residues S852 and S859 each carry the phosphoserine modification. At T861 the chain carries Phosphothreonine. SH3 domains are found at residues L868 to A936 and V972 to D1039. A disordered region spans residues H1044–P1072. Positions S1060–P1072 are enriched in basic residues.

This sequence belongs to the RIMBP family. In terms of assembly, interacts with RIMS1, RIMS2, CACNA1D and CACNA1B, and potentially with other Ca(2+) channel alpha-1 isoforms.

The protein resides in the cell membrane. It is found in the synapse. In terms of biological role, plays a role in the synaptic transmission as bifunctional linker that interacts simultaneously with RIMS1, RIMS2, CACNA1D and CACNA1B. The chain is RIMS-binding protein 2 (Rimbp2) from Mus musculus (Mouse).